Here is a 158-residue protein sequence, read N- to C-terminus: Probable host range protein 2-1 (158 aa).

The protein belongs to the poxviridae C7 protein family.

In terms of biological role, plays a role for multiplication of the virus in different cell types. This Rabbit fibroma virus (strain Kasza) (RFV) protein is Probable host range protein 2-1.